The primary structure comprises 284 residues: Probable endonuclease 4 (284 aa).

The Zn(2+) site is built by His-69, His-109, Glu-145, Asp-179, His-182, His-216, Asp-229, His-231, and Glu-261.

Belongs to the AP endonuclease 2 family. Requires Zn(2+) as cofactor.

It carries out the reaction Endonucleolytic cleavage to 5'-phosphooligonucleotide end-products.. Functionally, endonuclease IV plays a role in DNA repair. It cleaves phosphodiester bonds at apurinic or apyrimidinic (AP) sites, generating a 3'-hydroxyl group and a 5'-terminal sugar phosphate. In Klebsiella pneumoniae (strain 342), this protein is Probable endonuclease 4.